The sequence spans 456 residues: Elongator complex protein 4 (456 aa).

A compositionally biased stretch (basic and acidic residues) spans 1–11 (MSFRKRGEILN). The disordered stretch occupies residues 1-91 (MSFRKRGEIL…SQPTTSTGSA (91 aa)). At arginine 13 the chain carries Omega-N-methylarginine. A compositionally biased stretch (low complexity) spans 18-27 (RGPLLRGPPR). A compositionally biased stretch (basic and acidic residues) spans 57–66 (NIADESKTKM). Residues 77-90 (PSPATSQPTTSTGS) are compositionally biased toward low complexity. Residue serine 222 is modified to Phosphoserine. The tract at residues 424–444 (EGSAASEQSHSHSHSDEISHN) is disordered. Basic and acidic residues predominate over residues 432 to 442 (SHSHSHSDEIS).

This sequence belongs to the ELP4 family. As to quaternary structure, component of the elongator complex which consists of ELP1/IKI3, ELP2, ELP3, ELP4, ELP5/IKI1 and ELP6. The elongator complex is composed of two copies of the Elp123 subcomplex (composed of ELP1/IKI3, ELP2 and ELP3) and two copies of the Elp456 subcomplex (composed of ELP4, ELP5/IKI1 and ELP6). The Elp123 subcomplex forms a two-lobed scaffold, which binds the Elp456 subcomplex asymmetrically. In each lobe, ELP2 is tightly sandwiched between ELP1/IKI3 and ELP3. The Elp123 subcomplex binds tRNA through ELP1/IKI3 and ELP3 and can bind 2 tRNAs simultaneously. tRNA-binding by the Elp123 subcomplex induces conformational rearrangements which precisely position the targeted anticodon base in the active site. The Elp456 subcomplex binds tRNA and has ATPase activity. ELP4 interacts with KTI12.

The protein resides in the cytoplasm. It localises to the nucleus. It participates in tRNA modification; 5-methoxycarbonylmethyl-2-thiouridine-tRNA biosynthesis. In terms of biological role, component of the elongator complex, a multiprotein complex which is required for multiple tRNA modifications, including mcm5U (5-methoxycarbonylmethyl uridine), mcm5s2U (5-methoxycarbonylmethyl-2-thiouridine), and ncm5U (5-carbamoylmethyl uridine). The elongator complex catalyzes formation of carboxymethyluridine in the wobble base at position 34 in tRNAs. It functions as a gamma-toxin target (TOT); disruption of the complex confers resistance to Kluyveromyces lactis toxin zymocin (pGKL1 killer toxin). May also be involved in sensitivity to Pichia inositovora toxin. The polypeptide is Elongator complex protein 4 (Saccharomyces cerevisiae (strain ATCC 204508 / S288c) (Baker's yeast)).